Here is a 196-residue protein sequence, read N- to C-terminus: Pyroglutamyl-peptidase 1-like protein (196 aa).

Residues E65, C127, and H146 contribute to the active site.

It belongs to the peptidase C15 family.

The chain is Pyroglutamyl-peptidase 1-like protein (PGPEP1L) from Homo sapiens (Human).